We begin with the raw amino-acid sequence, 156 residues long: 6,7-dimethyl-8-ribityllumazine synthase (156 aa).

Residues F22, 57-59 (AVE), and 81-83 (SVI) contribute to the 5-amino-6-(D-ribitylamino)uracil site. Position 86-87 (86-87 (GT)) interacts with (2S)-2-hydroxy-3-oxobutyl phosphate. H89 functions as the Proton donor in the catalytic mechanism. F114 is a binding site for 5-amino-6-(D-ribitylamino)uracil. R128 serves as a coordination point for (2S)-2-hydroxy-3-oxobutyl phosphate.

Belongs to the DMRL synthase family. As to quaternary structure, forms an icosahedral capsid composed of 60 subunits, arranged as a dodecamer of pentamers.

The enzyme catalyses (2S)-2-hydroxy-3-oxobutyl phosphate + 5-amino-6-(D-ribitylamino)uracil = 6,7-dimethyl-8-(1-D-ribityl)lumazine + phosphate + 2 H2O + H(+). It participates in cofactor biosynthesis; riboflavin biosynthesis; riboflavin from 2-hydroxy-3-oxobutyl phosphate and 5-amino-6-(D-ribitylamino)uracil: step 1/2. In terms of biological role, catalyzes the formation of 6,7-dimethyl-8-ribityllumazine by condensation of 5-amino-6-(D-ribitylamino)uracil with 3,4-dihydroxy-2-butanone 4-phosphate. This is the penultimate step in the biosynthesis of riboflavin. The chain is 6,7-dimethyl-8-ribityllumazine synthase from Aliivibrio salmonicida (strain LFI1238) (Vibrio salmonicida (strain LFI1238)).